The chain runs to 207 residues: 3-isopropylmalate dehydratase small subunit (207 aa).

The protein belongs to the LeuD family. LeuD type 1 subfamily. Heterodimer of LeuC and LeuD.

It catalyses the reaction (2R,3S)-3-isopropylmalate = (2S)-2-isopropylmalate. It participates in amino-acid biosynthesis; L-leucine biosynthesis; L-leucine from 3-methyl-2-oxobutanoate: step 2/4. Catalyzes the isomerization between 2-isopropylmalate and 3-isopropylmalate, via the formation of 2-isopropylmaleate. In Gluconacetobacter diazotrophicus (strain ATCC 49037 / DSM 5601 / CCUG 37298 / CIP 103539 / LMG 7603 / PAl5), this protein is 3-isopropylmalate dehydratase small subunit.